Reading from the N-terminus, the 151-residue chain is Transcriptional repressor NrdR (151 aa).

The segment at 3–34 is a zinc-finger region; the sequence is CPFCNSVDTSVKNSRPSDCKMSVRRRRSCDSC. Residues 49–139 enclose the ATP-cone domain; the sequence is VKVLKKDGSV…VYMNFSDVND (91 aa).

The protein belongs to the NrdR family. Zn(2+) serves as cofactor.

Negatively regulates transcription of bacterial ribonucleotide reductase nrd genes and operons by binding to NrdR-boxes. This is Transcriptional repressor NrdR from Anaplasma marginale (strain Florida).